The sequence spans 34 residues: Photosystem II reaction center protein M (34 aa).

The chain crosses the membrane as a helical span at residues 7 to 27 (GFLATLLFVAVPMLFLIGLYI).

Belongs to the PsbM family. PSII is composed of 1 copy each of membrane proteins PsbA, PsbB, PsbC, PsbD, PsbE, PsbF, PsbH, PsbI, PsbJ, PsbK, PsbL, PsbM, PsbT, PsbX, PsbY, Psb30/Ycf12, peripheral proteins PsbO, CyanoQ (PsbQ), PsbU, PsbV and a large number of cofactors. It forms dimeric complexes.

It localises to the cellular thylakoid membrane. Functionally, one of the components of the core complex of photosystem II (PSII). PSII is a light-driven water:plastoquinone oxidoreductase that uses light energy to abstract electrons from H(2)O, generating O(2) and a proton gradient subsequently used for ATP formation. It consists of a core antenna complex that captures photons, and an electron transfer chain that converts photonic excitation into a charge separation. This subunit is found at the monomer-monomer interface. This is Photosystem II reaction center protein M from Prochlorococcus marinus (strain MIT 9303).